The following is a 129-amino-acid chain: Bacteriohemerythrin (129 aa).

Residues His-19, His-59, Glu-63, His-78, His-82, His-119, and Asp-124 each contribute to the Fe cation site.

It belongs to the hemerythrin family. As to quaternary structure, monomer.

Oxygen-binding protein. May be involved in a storage mechanism or for delivery to oxygen-requiring enzymes. The oxygen-binding site contains two iron atoms. In Clostridium acetobutylicum (strain ATCC 824 / DSM 792 / JCM 1419 / IAM 19013 / LMG 5710 / NBRC 13948 / NRRL B-527 / VKM B-1787 / 2291 / W), this protein is Bacteriohemerythrin.